A 138-amino-acid chain; its full sequence is Ribosome-binding factor A (138 aa).

Residues 116-138 (VAQDSQHQEGPASPDAKPESTEE) are disordered.

The protein belongs to the RbfA family. In terms of assembly, monomer. Binds 30S ribosomal subunits, but not 50S ribosomal subunits or 70S ribosomes.

It localises to the cytoplasm. Its function is as follows. One of several proteins that assist in the late maturation steps of the functional core of the 30S ribosomal subunit. Associates with free 30S ribosomal subunits (but not with 30S subunits that are part of 70S ribosomes or polysomes). Required for efficient processing of 16S rRNA. May interact with the 5'-terminal helix region of 16S rRNA. This is Ribosome-binding factor A from Pseudomonas syringae pv. tomato (strain ATCC BAA-871 / DC3000).